We begin with the raw amino-acid sequence, 159 residues long: ATP synthase subunit b (159 aa).

A helical membrane pass occupies residues 2–22 (NISIPQIIAAILNFIILLLIV).

Belongs to the ATPase B chain family. F-type ATPases have 2 components, F(1) - the catalytic core - and F(0) - the membrane proton channel. F(1) has five subunits: alpha(3), beta(3), gamma(1), delta(1), epsilon(1). F(0) has three main subunits: a(1), b(2) and c(10-14). The alpha and beta chains form an alternating ring which encloses part of the gamma chain. F(1) is attached to F(0) by a central stalk formed by the gamma and epsilon chains, while a peripheral stalk is formed by the delta and b chains.

The protein localises to the cell membrane. Its function is as follows. F(1)F(0) ATP synthase produces ATP from ADP in the presence of a proton or sodium gradient. F-type ATPases consist of two structural domains, F(1) containing the extramembraneous catalytic core and F(0) containing the membrane proton channel, linked together by a central stalk and a peripheral stalk. During catalysis, ATP synthesis in the catalytic domain of F(1) is coupled via a rotary mechanism of the central stalk subunits to proton translocation. In terms of biological role, component of the F(0) channel, it forms part of the peripheral stalk, linking F(1) to F(0). In Clostridium botulinum (strain ATCC 19397 / Type A), this protein is ATP synthase subunit b.